The sequence spans 75 residues: Large ribosomal subunit protein bL31 (75 aa).

Belongs to the bacterial ribosomal protein bL31 family. Type A subfamily. As to quaternary structure, part of the 50S ribosomal subunit.

Binds the 23S rRNA. The chain is Large ribosomal subunit protein bL31 from Chlorobium limicola (strain DSM 245 / NBRC 103803 / 6330).